A 412-amino-acid chain; its full sequence is Putative oxidoreductase bli-4, mitochondrial (412 aa).

Residues 1–55 (MSTKLCQRIARTATLSPTSLVPRSSRLIPIVSSAAVRPSSAIPTRRPFSTTESRY) constitute a mitochondrion transit peptide. 8 residues coordinate NADP(+): I108, N120, N186, Y269, K273, V308, T310, and Q312. The active-site Proton donor is the Y269. K273 (lowers pKa of active site Tyr) is an active-site residue.

This sequence belongs to the short-chain dehydrogenases/reductases (SDR) family.

The protein resides in the mitochondrion. Functionally, may play a role as an NAD-dependent dehydrogenase in the mitochondria. In Neurospora crassa (strain ATCC 24698 / 74-OR23-1A / CBS 708.71 / DSM 1257 / FGSC 987), this protein is Putative oxidoreductase bli-4, mitochondrial (bli-4).